A 250-amino-acid polypeptide reads, in one-letter code: Proteasome subunit alpha type-4-A (250 aa).

Glycyl lysine isopeptide (Lys-Gly) (interchain with G-Cter in ubiquitin) cross-links involve residues Lys40 and Lys64.

It belongs to the peptidase T1A family. In terms of assembly, component of the 20S core complex of the 26S proteasome. The 26S proteasome is composed of a core protease (CP), known as the 20S proteasome, capped at one or both ends by the 19S regulatory particle (RP/PA700). The 20S proteasome core is composed of 28 subunits that are arranged in four stacked rings, resulting in a barrel-shaped structure. The two end rings are each formed by seven alpha subunits, and the two central rings are each formed by seven beta subunits. The catalytic chamber with the active sites is on the inside of the barrel. Ubiquitous low levels, higher expression in siliques and flowers.

Its subcellular location is the cytoplasm. The protein resides in the nucleus. The proteasome is a multicatalytic proteinase complex which is characterized by its ability to cleave peptides with Arg, Phe, Tyr, Leu, and Glu adjacent to the leaving group at neutral or slightly basic pH. The proteasome has an ATP-dependent proteolytic activity. The protein is Proteasome subunit alpha type-4-A (PAC1) of Arabidopsis thaliana (Mouse-ear cress).